The primary structure comprises 236 residues: 2,3,4,5-tetrahydropyridine-2,6-dicarboxylate N-acetyltransferase (236 aa).

Belongs to the transferase hexapeptide repeat family. DapH subfamily.

The catalysed reaction is (S)-2,3,4,5-tetrahydrodipicolinate + acetyl-CoA + H2O = L-2-acetamido-6-oxoheptanedioate + CoA. Its pathway is amino-acid biosynthesis; L-lysine biosynthesis via DAP pathway; LL-2,6-diaminopimelate from (S)-tetrahydrodipicolinate (acetylase route): step 1/3. Catalyzes the transfer of an acetyl group from acetyl-CoA to tetrahydrodipicolinate. The sequence is that of 2,3,4,5-tetrahydropyridine-2,6-dicarboxylate N-acetyltransferase from Lactiplantibacillus plantarum (strain ATCC BAA-793 / NCIMB 8826 / WCFS1) (Lactobacillus plantarum).